A 300-amino-acid polypeptide reads, in one-letter code: Ribonuclease HIII (300 aa).

The RNase H type-2 domain maps to 86-300 (RPRLGVDESG…FNEICDSASA (215 aa)). 3 residues coordinate a divalent metal cation: Asp92, Glu93, and Asp196.

This sequence belongs to the RNase HII family. RnhC subfamily. Requires Mn(2+) as cofactor. The cofactor is Mg(2+).

Its subcellular location is the cytoplasm. The catalysed reaction is Endonucleolytic cleavage to 5'-phosphomonoester.. In terms of biological role, endonuclease that specifically degrades the RNA of RNA-DNA hybrids. The sequence is that of Ribonuclease HIII from Chlamydia felis (strain Fe/C-56) (Chlamydophila felis).